The chain runs to 179 residues: Cell division protein SepF (179 aa).

The disordered stretch occupies residues L22–K55. The span at T33–K55 shows a compositional bias: polar residues.

This sequence belongs to the SepF family. As to quaternary structure, homodimer. Interacts with FtsZ.

Its subcellular location is the cytoplasm. Functionally, cell division protein that is part of the divisome complex and is recruited early to the Z-ring. Probably stimulates Z-ring formation, perhaps through the cross-linking of FtsZ protofilaments. Its function overlaps with FtsA. The sequence is that of Cell division protein SepF from Streptococcus pneumoniae (strain Taiwan19F-14).